The sequence spans 349 residues: Hydroxymethylglutaryl-CoA synthase (349 aa).

Position 30 (aspartate 30) interacts with (3S)-3-hydroxy-3-methylglutaryl-CoA. Catalysis depends on glutamate 82, which acts as the Proton donor/acceptor. Cysteine 114 contributes to the (3S)-3-hydroxy-3-methylglutaryl-CoA binding site. The Acyl-thioester intermediate role is filled by cysteine 114. Arginine 203 provides a ligand contact to CoA. (3S)-3-hydroxy-3-methylglutaryl-CoA-binding residues include threonine 205 and histidine 238. Histidine 238 serves as the catalytic Proton donor/acceptor. Residue lysine 243 participates in CoA binding. (3S)-3-hydroxy-3-methylglutaryl-CoA contacts are provided by lysine 247, asparagine 270, and serine 300.

It belongs to the thiolase-like superfamily. Archaeal HMG-CoA synthase family. In terms of assembly, interacts with acetoacetyl-CoA thiolase that catalyzes the precedent step in the pathway and with a DUF35 protein. The acetoacetyl-CoA thiolase/HMG-CoA synthase complex channels the intermediate via a fused CoA-binding site, which allows for efficient coupling of the endergonic thiolase reaction with the exergonic HMGCS reaction.

It carries out the reaction acetoacetyl-CoA + acetyl-CoA + H2O = (3S)-3-hydroxy-3-methylglutaryl-CoA + CoA + H(+). The protein operates within metabolic intermediate biosynthesis; (R)-mevalonate biosynthesis; (R)-mevalonate from acetyl-CoA: step 2/3. Catalyzes the condensation of acetyl-CoA with acetoacetyl-CoA to form 3-hydroxy-3-methylglutaryl-CoA (HMG-CoA). Functions in the mevalonate (MVA) pathway leading to isopentenyl diphosphate (IPP), a key precursor for the biosynthesis of isoprenoid compounds that are building blocks of archaeal membrane lipids. This chain is Hydroxymethylglutaryl-CoA synthase, found in Methanothermococcus thermolithotrophicus (Methanococcus thermolithotrophicus).